A 103-amino-acid polypeptide reads, in one-letter code: Potassium voltage-gated channel subfamily E member 3 (103 aa).

N5, N22, and N41 each carry an N-linked (GlcNAc...) asparagine glycan. Residues 32 to 53 (RPGPGLGPDNQTEERRASLPGR) form a disordered region. Positions 43 to 53 (TEERRASLPGR) are enriched in basic and acidic residues. Residues 57 to 77 (SYMYILFVMFLFAVTVGSLIL) traverse the membrane as a helical segment. The interaction with KCNQ1 stretch occupies residues 68–79 (FAVTVGSLILGY). The Cytoplasmic portion of the chain corresponds to 78–103 (GYTRSRKVDKRSDPYHVYIKNRVSMI).

The protein belongs to the potassium channel KCNE family. Interacts with KCNB1. Interacts with KCNC2. Associates with KCNC4/Kv3.4. Interacts with KCNQ1; associates with a KCNQ1:KCNE3 stoichiometry of 4:4; produces a current with nearly instantaneous activation with a linear current-voltage relationship and alters membrane raft localization; affects KCNQ1 structure and gating properties. Expressed in hippocampal neurons (at protein level). Widely expressed with highest levels in kidney and moderate levels in small intestine.

It is found in the cell membrane. The protein resides in the cytoplasm. Its subcellular location is the perikaryon. The protein localises to the cell projection. It localises to the dendrite. It is found in the membrane raft. Ancillary protein that functions as a regulatory subunit of the voltage-gated potassium (Kv) channel complex composed of pore-forming and potassium-conducting alpha subunits and of regulatory beta subunits. KCNE3 beta subunit modulates the gating kinetics and enhances stability of the channel complex. Alters the gating of the delayed rectifier Kv channel containing KCNB1 alpha subunit. Associates with KCNC4/Kv3.4 alpha subunit to form the subthreshold Kv channel in skeletal muscle and to establish the resting membrane potential (RMP) in muscle cells. Association with KCNQ1/KCLQT1 alpha subunit may form the intestinal cAMP-stimulated potassium channel involved in chloride secretion that produces a current with nearly instantaneous activation with a linear current-voltage relationship. In Homo sapiens (Human), this protein is Potassium voltage-gated channel subfamily E member 3.